A 476-amino-acid polypeptide reads, in one-letter code: Sulfate adenylyltransferase subunit 1 (476 aa).

The tr-type G domain occupies K17 to N232. Residues G26 to S33 are G1. GTP is bound at residue G26 to S33. Positions G84–D88 are G2. Residues D105–G108 form a G3 region. GTP contacts are provided by residues D105–H109 and N160–D163. The interval N160–D163 is G4. The interval S197–L199 is G5.

Belongs to the TRAFAC class translation factor GTPase superfamily. Classic translation factor GTPase family. CysN/NodQ subfamily. Heterodimer composed of CysD, the smaller subunit, and CysN.

It carries out the reaction sulfate + ATP + H(+) = adenosine 5'-phosphosulfate + diphosphate. It functions in the pathway sulfur metabolism; hydrogen sulfide biosynthesis; sulfite from sulfate: step 1/3. With CysD forms the ATP sulfurylase (ATPS) that catalyzes the adenylation of sulfate producing adenosine 5'-phosphosulfate (APS) and diphosphate, the first enzymatic step in sulfur assimilation pathway. APS synthesis involves the formation of a high-energy phosphoric-sulfuric acid anhydride bond driven by GTP hydrolysis by CysN coupled to ATP hydrolysis by CysD. This is Sulfate adenylyltransferase subunit 1 from Bacteroides fragilis (strain YCH46).